A 199-amino-acid chain; its full sequence is MARCKS-related protein (199 aa).

Positions 1–199 (MGSQSSKAPR…GPASASAENE (199 aa)) are disordered. A lipid anchor (N-myristoyl glycine) is attached at G2. T14 bears the Phosphothreonine mark. Low complexity predominate over residues 16–26 (EEAAGASPAKA). S22, S36, and S48 each carry phosphoserine. Over residues 53-64 (GADEAAGATGDA) the composition is skewed to low complexity. S71 carries the phosphoserine modification. Basic and acidic residues predominate over residues 74–85 (AEAKGEVAPKET). T85 carries the post-translational modification Phosphothreonine. Residues 86–98 (PKKKKKFSFKKPF) are compositionally biased toward basic residues. Positions 87 to 110 (KKKKKFSFKKPFKLSGLSFKRNRK) are effector domain involved in lipid-binding and calmodulin-binding. A phosphoserine; by PKC mark is found at S93, S101, and S104. S119 carries the phosphoserine modification. Residue S120 is modified to Phosphoserine; by MAPK8. Phosphoserine occurs at positions 132 and 135. Residue T148 is modified to Phosphothreonine; by MAPK8. Phosphoserine occurs at positions 151, 162, and 165. Positions 175-199 (GPQAAEPSTPSGPESGPASASAENE) are enriched in low complexity. T183 carries the phosphothreonine; by MAPK8 modification.

This sequence belongs to the MARCKS family. Binds to filamentous actin (F-actin), but not to monomeric G-actin, independently of its phosphorylation status. Interacts with calmodulin. Post-translationally, phosphorylated. Phosphorylation at Ser-120 and Thr-183 is non-redundantly catalyzed by MAPK8 in vivo. Phosphorylation at Thr-148 is preferentially catalyzed by MAPK8 in vivo, but this modification can also be catalyzed by other kinases in the absence of MAPK8. May be phosphorylated by protein kinase C, which disrupts the interaction with calmodulin.

The protein localises to the cytoplasm. It localises to the cytoskeleton. The protein resides in the cell membrane. Controls cell movement by regulating actin cytoskeleton homeostasis and filopodium and lamellipodium formation. When unphosphorylated, induces cell migration. When phosphorylated by MAPK8, induces actin bundles formation and stabilization, thereby reducing actin plasticity, hence restricting cell movement, including neuronal migration. May be involved in coupling the protein kinase C and calmodulin signal transduction systems. In Rattus norvegicus (Rat), this protein is MARCKS-related protein (Marcksl1).